The primary structure comprises 83 residues: U4-theraphotoxin-Hhn1x (83 aa).

Residues 1 to 20 form the signal peptide; that stretch reads MTLIAILTCAAALVLHTTAA. Positions 21 to 46 are excised as a propeptide; sequence EELEAESQLMEVGMPDTELEAVDEER. Disulfide bonds link cysteine 50–cysteine 64, cysteine 54–cysteine 75, and cysteine 69–cysteine 80.

The protein belongs to the neurotoxin 12 (Hwtx-2) family. 02 (Hwtx-2) subfamily. As to expression, expressed by the venom gland.

Its subcellular location is the secreted. Its function is as follows. Postsynaptic neurotoxin. This is U4-theraphotoxin-Hhn1x from Cyriopagopus hainanus (Chinese bird spider).